Here is a 384-residue protein sequence, read N- to C-terminus: Spermidine/putrescine import ATP-binding protein PotA (384 aa).

The ABC transporter domain maps to 6 to 238 (ITFNNVSKTF…PINHFVANFI (233 aa)). 40 to 47 (GASGSGKS) is an ATP binding site.

The protein belongs to the ABC transporter superfamily. Spermidine/putrescine importer (TC 3.A.1.11.1) family. In terms of assembly, the complex is composed of two ATP-binding proteins (PotA), two transmembrane proteins (PotB and PotC) and a solute-binding protein (PotD).

It localises to the cell membrane. The enzyme catalyses ATP + H2O + polyamine-[polyamine-binding protein]Side 1 = ADP + phosphate + polyamineSide 2 + [polyamine-binding protein]Side 1.. Part of the ABC transporter complex PotABCD involved in spermidine/putrescine import. Responsible for energy coupling to the transport system. This Streptococcus pyogenes serotype M18 (strain MGAS8232) protein is Spermidine/putrescine import ATP-binding protein PotA.